The primary structure comprises 379 residues: Queuine tRNA-ribosyltransferase (379 aa).

The active-site Proton acceptor is the D93. Substrate is bound by residues 93–97 (DSGGF), D147, Q191, and G218. The tract at residues 249-255 (GVGKPED) is RNA binding. D268 acts as the Nucleophile in catalysis. Residues 273 to 277 (TRNAR) are RNA binding; important for wobble base 34 recognition. The Zn(2+) site is built by C306, C308, C311, and H337.

This sequence belongs to the queuine tRNA-ribosyltransferase family. As to quaternary structure, homodimer. Within each dimer, one monomer is responsible for RNA recognition and catalysis, while the other monomer binds to the replacement base PreQ1. Zn(2+) is required as a cofactor.

The enzyme catalyses 7-aminomethyl-7-carbaguanine + guanosine(34) in tRNA = 7-aminomethyl-7-carbaguanosine(34) in tRNA + guanine. It functions in the pathway tRNA modification; tRNA-queuosine biosynthesis. Catalyzes the base-exchange of a guanine (G) residue with the queuine precursor 7-aminomethyl-7-deazaguanine (PreQ1) at position 34 (anticodon wobble position) in tRNAs with GU(N) anticodons (tRNA-Asp, -Asn, -His and -Tyr). Catalysis occurs through a double-displacement mechanism. The nucleophile active site attacks the C1' of nucleotide 34 to detach the guanine base from the RNA, forming a covalent enzyme-RNA intermediate. The proton acceptor active site deprotonates the incoming PreQ1, allowing a nucleophilic attack on the C1' of the ribose to form the product. After dissociation, two additional enzymatic reactions on the tRNA convert PreQ1 to queuine (Q), resulting in the hypermodified nucleoside queuosine (7-(((4,5-cis-dihydroxy-2-cyclopenten-1-yl)amino)methyl)-7-deazaguanosine). In Mannheimia succiniciproducens (strain KCTC 0769BP / MBEL55E), this protein is Queuine tRNA-ribosyltransferase.